A 173-amino-acid chain; its full sequence is Lens fiber membrane intrinsic protein (173 aa).

Topologically, residues 1-3 (MYS) are cytoplasmic. A helical membrane pass occupies residues 4 to 24 (FMGGGLFCAWVGTILLVVATA). Over 25-66 (TDHWMQYRLSGSFAHQGLWRYCLGNKCFLQTESIAYWNATRA) the chain is Extracellular. C-linked (Man) tryptophan glycosylation is found at W43 and W61. A glycan (N-linked (GlcNAc...) asparagine) is linked at N62. A helical membrane pass occupies residues 67-87 (FMILSALCATSGIIMGVLAFA). Over 88-98 (QQSTFTRLSRP) the chain is Cytoplasmic. The chain crosses the membrane as a helical span at residues 99–119 (FSAGIMFFASTLFVLLALAIY). At 120–140 (TGVTVSFLGRRFGDWRFSWSY) the chain is on the extracellular side. A helical membrane pass occupies residues 141-161 (ILGWVALLMTFFAGIFYMCAY). At 162–173 (RMHECRRLSTPR) the chain is on the cytoplasmic side. S170 carries the post-translational modification Phosphoserine. T171 bears the Phosphothreonine mark.

The protein belongs to the PMP-22/EMP/MP20 family. Seems to be associated with itself or another lens membrane component via disulfide bonds. Eye lens specific.

The protein localises to the membrane. In terms of biological role, present in the thicker 16-17 nm junctions of mammalian lens fiber cells, where it may contribute to cell junctional organization. Acts as a receptor for calmodulin. May play an important role in both lens development and cataractogenesis. This chain is Lens fiber membrane intrinsic protein (Lim2), found in Rattus norvegicus (Rat).